The primary structure comprises 330 residues: Endochitinase Ziz m 1.0101 (330 aa).

The signal sequence occupies residues 1 to 24 (MVPQAKLVVASLILTSALIQTSEA). The 305-residue stretch at 26-330 (GGIATYWGQY…LRTKFMYQNA (305 aa)) folds into the GH18 domain. Intrachain disulfides connect C47–C90, C77–C80, and C187–C219. Residues 72–86 (NISGHCSDCTFLGEE) form a binds to IgE in 70% of the 10 patients tested allergic to Indian jujube and latex region. Residues 292-301 (VWNRYYDLKT) form a binds to IgE in 100% of the 10 patients tested allergic to Indian jujube and latex; sufficient for prediction of the presence of allergic reactions in these patients region. 2 binds to IgE in 70% of the 10 patients tested allergic to Indian jujube and latex regions span residues 300-311 (KTNYSSSIILEY) and 309-320 (LEYVNSGTKYLP).

It belongs to the glycosyl hydrolase 18 family. Chitinase class II subfamily.

Its subcellular location is the secreted. It carries out the reaction Random endo-hydrolysis of N-acetyl-beta-D-glucosaminide (1-&gt;4)-beta-linkages in chitin and chitodextrins.. Functionally, defense against chitin containing fungal pathogens. This Ziziphus mauritiana (Indian jujube) protein is Endochitinase Ziz m 1.0101.